An 82-amino-acid polypeptide reads, in one-letter code: SKKEIPGGYPVNQFKCTYECAHADTDHIRCKNLCKKLGGSWGYCYWNTCYCEYLPDSVPQKNSIEVFSCGATIVGVPDTEQQ.

An LCN-type CS-alpha/beta domain is found at Pro-6 to Gly-70. Cystine bridges form between Cys-16-Cys-69, Cys-20-Cys-44, Cys-30-Cys-49, and Cys-34-Cys-51.

This sequence belongs to the long (4 C-C) scorpion toxin superfamily. Sodium channel inhibitor family. Expressed by the venom gland.

It is found in the secreted. In terms of biological role, probable sodium channel inhibitor. The sequence is that of Toxin NaTx-13 from Centruroides sculpturatus (Arizona bark scorpion).